The chain runs to 292 residues: Ribosomal RNA small subunit methyltransferase A (292 aa).

The S-adenosyl-L-methionine site is built by Asn-28, Leu-30, Gly-55, Glu-77, Asp-103, and Asn-123.

Belongs to the class I-like SAM-binding methyltransferase superfamily. rRNA adenine N(6)-methyltransferase family. RsmA subfamily.

It localises to the cytoplasm. The enzyme catalyses adenosine(1518)/adenosine(1519) in 16S rRNA + 4 S-adenosyl-L-methionine = N(6)-dimethyladenosine(1518)/N(6)-dimethyladenosine(1519) in 16S rRNA + 4 S-adenosyl-L-homocysteine + 4 H(+). Specifically dimethylates two adjacent adenosines (A1518 and A1519) in the loop of a conserved hairpin near the 3'-end of 16S rRNA in the 30S particle. May play a critical role in biogenesis of 30S subunits. The chain is Ribosomal RNA small subunit methyltransferase A from Methylobacterium radiotolerans (strain ATCC 27329 / DSM 1819 / JCM 2831 / NBRC 15690 / NCIMB 10815 / 0-1).